Here is a 219-residue protein sequence, read N- to C-terminus: Leucyl/phenylalanyl-tRNA--protein transferase (219 aa).

It belongs to the L/F-transferase family.

The protein resides in the cytoplasm. It catalyses the reaction N-terminal L-lysyl-[protein] + L-leucyl-tRNA(Leu) = N-terminal L-leucyl-L-lysyl-[protein] + tRNA(Leu) + H(+). The enzyme catalyses N-terminal L-arginyl-[protein] + L-leucyl-tRNA(Leu) = N-terminal L-leucyl-L-arginyl-[protein] + tRNA(Leu) + H(+). It carries out the reaction L-phenylalanyl-tRNA(Phe) + an N-terminal L-alpha-aminoacyl-[protein] = an N-terminal L-phenylalanyl-L-alpha-aminoacyl-[protein] + tRNA(Phe). Its function is as follows. Functions in the N-end rule pathway of protein degradation where it conjugates Leu, Phe and, less efficiently, Met from aminoacyl-tRNAs to the N-termini of proteins containing an N-terminal arginine or lysine. This chain is Leucyl/phenylalanyl-tRNA--protein transferase, found in Leptospira borgpetersenii serovar Hardjo-bovis (strain JB197).